Consider the following 84-residue polypeptide: Acyl carrier protein homolog (84 aa).

One can recognise a Carrier domain in the interval 4–79; sequence RDILLKIKEI…ELIAEVKHLI (76 aa). Residue Ser-39 is modified to O-(pantetheine 4'-phosphoryl)serine.

Post-translationally, 4'-phosphopantetheine is transferred from CoA to a specific serine of the apo-ACP-like protein.

It participates in lipid metabolism; fatty acid biosynthesis. Carrier of the growing fatty acid chain in fatty acid biosynthesis. In Mycoplasma pneumoniae (strain ATCC 29342 / M129 / Subtype 1) (Mycoplasmoides pneumoniae), this protein is Acyl carrier protein homolog.